A 327-amino-acid chain; its full sequence is ATP-dependent 6-phosphofructokinase (327 aa).

Residue Gly12 participates in ATP binding. ADP contacts are provided by residues 22-26 (RGVVR) and 55-60 (RYSVSD). Residues 73–74 (RF) and 103–106 (GDGS) each bind ATP. A Mg(2+)-binding site is contributed by Asp104. Substrate is bound at residue 127-129 (TID). Asp129 functions as the Proton acceptor in the catalytic mechanism. Arg156 is a binding site for ADP. Substrate is bound by residues Arg164 and 171-173 (MGR). ADP-binding positions include 187-189 (GCE), Lys213, and 215-217 (KKH). Substrate is bound by residues Glu224, Arg245, and 251–254 (HIQR).

Belongs to the phosphofructokinase type A (PFKA) family. ATP-dependent PFK group I subfamily. Prokaryotic clade 'B1' sub-subfamily. In terms of assembly, homotetramer. Mg(2+) serves as cofactor.

It is found in the cytoplasm. It carries out the reaction beta-D-fructose 6-phosphate + ATP = beta-D-fructose 1,6-bisphosphate + ADP + H(+). It participates in carbohydrate degradation; glycolysis; D-glyceraldehyde 3-phosphate and glycerone phosphate from D-glucose: step 3/4. Its activity is regulated as follows. Allosterically activated by ADP and other diphosphonucleosides, and allosterically inhibited by phosphoenolpyruvate. Catalyzes the phosphorylation of D-fructose 6-phosphate to fructose 1,6-bisphosphate by ATP, the first committing step of glycolysis. The sequence is that of ATP-dependent 6-phosphofructokinase from Yersinia pseudotuberculosis serotype IB (strain PB1/+).